A 371-amino-acid chain; its full sequence is Glyco-Gag protein (371 aa).

Residues 1 to 51 (MSGASSGTAIGAHLFGVSPEYRVLIGDEGAGPSKSLSEVSFSVWYRSRAAR) lie on the Cytoplasmic side of the membrane. A helical transmembrane segment spans residues 52–72 (LVILCLVASFLVPCLTFLIAE). Topologically, residues 73 to 371 (AVMGQTVTTP…NVIDETFPLT (299 aa)) are extracellular. Residue N134 is glycosylated (N-linked (GlcNAc...) asparagine; by host). Disordered stretches follow at residues 171 to 281 (VRPF…NNRP) and 350 to 371 (VPGE…FPLT). The span at 174–193 (FLPPPKPPTPLPQPLSPQPS) shows a compositional bias: pro residues. The segment covering 194–203 (APLTSSLYPV) has biased composition (low complexity). Pro residues-rich tracts occupy residues 204 to 220 (VPKP…PDPS) and 230 to 245 (EPPP…PSGP).

In terms of processing, glycosylated by host. Post-translationally, cleaved by host near the middle of the molecule, releasing the c-terminal half containing capsid and nucleoprotein domains op GAG.

The protein resides in the host cell membrane. Functionally, plays a role in viral particle release. Presumably acts by facilitating the fission of the virion bud at the cell surface. This is Glyco-Gag protein from Feline sarcoma virus (strain Snyder-Theilen).